The following is a 217-amino-acid chain: Small ribosomal subunit protein uS3 (217 aa).

The region spanning Ala-29–Gln-97 is the KH type-2 domain.

This sequence belongs to the universal ribosomal protein uS3 family. As to quaternary structure, part of the 30S ribosomal subunit. Forms a tight complex with proteins S10 and S14.

Functionally, binds the lower part of the 30S subunit head. Binds mRNA in the 70S ribosome, positioning it for translation. This is Small ribosomal subunit protein uS3 from Streptococcus mutans serotype c (strain ATCC 700610 / UA159).